A 4388-amino-acid chain; its full sequence is MLEGLVAWVLNTYLGKYVNNLNTDQLSVALLKGAVELENLPLKKDALKELELPFEVKAGFIGKVTLQIPFYRPHVDPWVISISSLHLIGAPEKIQDFNDEKEKLLERERKKALLQALEEKWKNDRQQKGESYWYSVTASVVTRIVENIELKIQDVHLRFEDGVTNPSHPFAFGICIKNVSMQNAVNEPVQKLMRKKQLDVAEFSIYWDVDCTLLGDLPQMELQEAMARSMESRSHHYVLEPVFASALLKRNCSKKPLRSRHSPRIDCDIQLETIPLKLSQLQYRQIMEFLKELERKERQVKFRRWKPKVAISKNCREWWYFALNANLYEIREQRKRCTWDFMLHRARDAVSYTDKYFNKLKGGLLSTDDKEEMCRIEEEQSFEELKILRELVHDRFHKQEELAESLREPQFDSPGACPGAPEPGGGSGMLQYLQSWFPGWGGWYGQQTPEGNVVEGLSAEQQEQWIPEEILGTEEFFDPTADASCMNTYTKRDHVFAKLNLQLQRGTVTLLHKEQGTPQMNESAFMQLEFSDVKLLAESLPRRNSSLLSVRLGGLFLRDLATEGTMFPLLVFPNPQKEVGRVSQSFGLQTTSADRSDHYPAADPDGPVFEMLYERNPAHSHFERRLNVSTRPLNIIYNPQAIKKVADFFYKGKVHTSGFGYQSELELRVAEAARRQYNKLKMQTKAEIRQTLDRLLVGDFIEESKRWTVRLDISAPQVIFPDDFKFKNPVLVVVDLGRMLLTNTQDNSRRKSRDGSASEETQFSDDEYKTPLATPPNTPPPESSSSNGEKTPPFSGVEFSEEQLQAHLMSTKMYERYSLSFMDLQIMVGRVKDNWKHVQDIDVGPTHVVEKFNVHLQLERRLIYTSDPKYPGAVLSGNLPDLKIHINEDKISALKNCFALLTTPEMKTSDTQIKEKIFPQEEQRGSLQDSVMNLTQSIVLLEQHTREVLVESQLLLAEFKVNCMQLGVESNGRYISVLKVFGTNAHFVKRPYDAEVSLTVHGLLLVDTMQTYGADFDLLMASHKNLSFDIPTGSLRDSRAQSPVSGPNVAHLTDGATLNDRSATSVSLDKILTKEQESLIKLEYQFVSSECPSMNLDSTLQVISLQVNNLDIILNPETIVELIGFLQKSFPKEKDDLSPQPLMTDFERSFREQGTYQSTYEQNTEVAVEIHRLNLLLLRTVGMANREKYGRKIATASIGGTKVNVSMGSTFDMNGSLGCLQLMDLTQDNVKNQYVVSIGNSVGYENIISDIGYFESVFVRMEDAALTEALSFTFVERSKQECFLNLKMASLHYNHSAKFLKELTLSMDELEENFRGMLKSAATKVTTVLATKTAEYSEMVSLFETPRKTREPFILEENEIYGFDLASSHLDTVKLILNINIESPVVSIPRKPGSPELLVGHLGQIFIQNFVAGDDESRSDRLQVEIKDIKLYSLNCTQLAGREAVGSEGSRMFCPPSGSGSANSQEEAHFTRHDFFESLHRGQAFHILNNTTIQFKLEKIPIERESELTFSLSPDDLGTSSIMKIEGKFVNPVQVVLAKHVYEQVLQTLDNLVYSEDLNKYPASATSSPCPDSPLPPLSTCGESSVERKENGLFSHSSLSNTSQKSLSVKEVKSFTQIQATFCISELQVQLSGDLTLGAQGLVSLKFQDFEVEFSKDHPQTLSIQIALHSLLMEDLLEKNPDSKYKNLMVSRGAPKPSSLAQKEYLSQSCPSVSNVEYPDMPRSLPSHMEEAPNVFQLYQRPTSASRKKQKEVQDKDYPLTPPPSPTVDEPKILVGKSKFDDSLVHINIFLVDKKHPEFSSSYNRVNRSIDVDFNCLDVLITLQTWVVILDFFGIGSTADNHAMRLPPEGILHNVKLEPHASMESGLQDPVNTKLDLKVHSLSLVLNKTTSELAKANVSKLVAHLEMIEGDLALQGSIGSLSLSDLTCHGEFYRERFTTSGEEALIFQTFKYGRPDPLLRREHDIRVSLRMASVQYVHTQRFQAEVVAFIQHFTQLQDVLGRQRAAIEGQTVRDQAQRCSRVLLDIEAGAPVLLIPESSRSNNLIVANLGKLKVKNKFLFAGFPGTFSLQDKESVPSASPTGIPKHSLRKTTSTEEPRGTHSQGQFTMPLAGMSLGSLKSEFVPSTSTKQQGPQPTLSVGQESSSPEDHVCLLDCVVVDLQDMDIFAAERHPREYSKAPEDSSGDLIFPSYFVRQTGGSLLTEPCRLKLQVERNLDKEISHTVPDISIHGNLSSVHCSLDLYKYKLIRGLLENNLGEPIEEFMRPYDLQDPRIHTVLSGEVYTCMCFLIDMVNVSLELKDPKRKEGAGSLARFDFKKCKLLYESFSNQTKSINLVSHSMMAFDTRYAGQKTSPGMTNVFSCIFQPAKNSSTTQGSIQIELHFRSTKDSSCFTVVLNNLRVFLIFDWLLLVHDFLHTPSDIKKQNHVTPSRHRNSSSESAIVPKTVKSGVVTKRSSLPVSNERHLEVKVNVTGTEFVVIEDVSCFDTNAIILKGTTVLTYKPRFVDRPFSGSLFGIEVFSCRLGNEHDTALSIVDPVQIQMELVGNSSYQNSSGLMDAFNSEDFPPVLEIQLQALDIRLSYNDVQLFLAIAKSIPEQANAAVPDSVALESDSVGTYLPGASRVGEEIREGTRHTLDPVLELQLARLQELGFSMDDCRKALLACQGQLKKAASWLFKNAEPLKSLSLASTSRDSPGAVAAPLISGVEIKAESVCICFIDDCMDCDVPLAELTFSRLNFLQRVRTSPEGYAHFTLSGDYYNRALSGWEPFIEPWPCSVSWQQQAASRLHPPRLKLEAKAKPRLDINITSVLIDQYVSTKESWMADYCKDDKDIESAKSEDWMGSSVDPPCFGQSLPLVYLRTRSTASLTNLEHQIYARAEVKTPKRRQPFVPFALRNHTGCTLWFATLTTTPTRAALSHSGSPGVVPEGNGTFLDDTHNVSEWREVLTGEEIPFEFEARGKLRHRHTHDLRIHQLQVRVNGWEQVSPVSVDKVGTFFRYAAPDKNSSSSTIGSPSSRTNIIHPQVYFSSLPPVRVVFAVTMEGSARKVITVRSALIVRNRLETPMELRLDSPSAPDKPVVLPAIMPGDSFAVPLHLTSWRLQARPKGLGVFFCKAPIHWTNVVKTAEISSSKRECHSMDTEKSRFFRFCVAIKKENYPDYMPSNIFSDSAKQIFRQPGHTIYLLPTVVICNLLPCELDFYVKGMPINGTLKPGKEAALHTADTSQNIELGVSLENFPLCKELLIPPGTQNYMVRMRLYDVNRRQLNLTIRIVCRAEGSLKIFISAPYWLINKTGLPLIFRQDNAKTDAAGQFEEHELARSLSPLLFCYADKEQPNLCTMRIGRGIHPEGMPGWCQGFSLDGGSGVRALKVIQQGNRPGLIYNIGIDVKKGRGRYIDTCMVIFAPRYLLDNKSSHKLAFAQREFARGQGTANPEGYISTLPGSSVVFHWPRNDYDQLLCVRLMDVPNCIWSGGFEVNKNNSFHINMRDTLGKCFFLRVEITLRGATYRISFSDTDQLPPPFRIDNFSKVPVVFTQHGVAEPRLRTEVKPMTSLDYAWDEPTLPPFITLTVKGAGSSEINCNMNDFQDNRQLYYENFIYIAATYTFSGLQEGTGRPVASNKAITCAELVLDVSPKTQRVILKKKEPGKRSQLWRMTGTGMLAHEGSSVPHNPNKPSAARSTEGSAILDIAGLAAVTDNRYEPLMLRKPDRRRSTTQTWSFREGKLTCGLHGLVVQAKGGLSGLFDGAEVVLGPDTSMELLGPVPPEQQFINQKMRPGSGMLSIRVIPDGPTRALQITDFCHRKSSRSYEVDELPVTEQELQKLKNPDTEQELEVLVRLEGGIGLSLINKVPEELVFASLTGINVHYTQLATSHMLELSIQDVQVDNQLIGTTQPFMLYVTPLSNENEVIETGPAVQVNAVKFPSKSALTNIYKHLMITAQRFTVQIEEKLLLKLLSFFGYDQAESEVEKYDENLHEKTAEQGGTPIRYYFENLKISIPQIKLSVFTSNKLPLDLKALKSTLGFPLIRFEDAVINLDPFTRVHPYETKEFIINDILKHFQEELLSQAARILGSVDFLGNPMGLLNDVSEGVTGLIKYGNVGGLIRNVTHGVSNSAAKFAGTLSDGLGKTMDNRHQSEREYIRYHAATSGEHLVAGIHGLAHGIIGGLTSVITSTVEGVKTEGGVSGFISGLGKGLVGTVTKPVAGALDFASETAQAVRDTATLSGPRTQAQRVRKPRCCTGPQGLLPRYSESQAEGQEQLFKLTDNIQDEFFIAVENIDSYCVLISSKAVYFLKSGDYVDREAIFLEVKYDDLYHCLVSKDHGKVYVQVTKKAVSTSSGVSIPGPSHQKPMVHVKSEVLAVKLSQEINYAKSLYYEQQLMLRLSENREQLELDS.

The 114-residue stretch at 2–115 (LEGLVAWVLN…ERERKKALLQ (114 aa)) folds into the Chorein N-terminal domain. Ser663 carries the post-translational modification Phosphoserine. Residues 745–796 (QDNSRRKSRDGSASEETQFSDDEYKTPLATPPNTPPPESSSSNGEKTPPFSG) are disordered. The span at 747 to 756 (NSRRKSRDGS) shows a compositional bias: basic and acidic residues. The span at 773-782 (ATPPNTPPPE) shows a compositional bias: pro residues. A phosphoserine mark is found at Ser1034, Ser1038, Ser1042, Ser1138, and Ser1341. The disordered stretch occupies residues 1563–1582 (ASATSSPCPDSPLPPLSTCG). A phosphoserine mark is found at Ser1598, Ser1603, and Ser1699. 3 disordered regions span residues 1741–1771 (RPTS…VDEP), 2070–2108 (QDKE…QFTM), and 2122–2145 (FVPS…ESSS). Thr1761 carries the phosphothreonine modification. A Phosphoserine modification is found at Ser1765. The segment covering 2123-2144 (VPSTSTKQQGPQPTLSVGQESS) has biased composition (polar residues). Phosphoserine occurs at positions 2435, 2671, 2861, 2864, and 2983. Positions 2633-2676 (TLDPVLELQLARLQELGFSMDDCRKALLACQGQLKKAASWLFKN) constitute a UBA domain. Residues 3276–3558 (LKIFISAPYW…LDYAWDEPTL (283 aa)) form the SHR-BD domain. Lys3524 is modified (N6-acetyllysine).

The protein belongs to the VPS13 family. Widely expressed.

In terms of biological role, mediates the transfer of lipids between membranes at organelle contact sites. Functions in promoting mitochondrial clearance by mitochondrial autophagy (mitophagy), also possibly by positively regulating mitochondrial fission. Mitophagy plays an important role in regulating cell health and mitochondrial size and homeostasis. This chain is Intermembrane lipid transfer protein VPS13D, found in Homo sapiens (Human).